Here is a 276-residue protein sequence, read N- to C-terminus: Ubiquinone biosynthesis protein coq11, mitochondrial (276 aa).

This sequence belongs to the NAD(P)-dependent epimerase/dehydratase family.

It is found in the mitochondrion. Functionally, acts in the coenzyme Q biosynthetic pathway. The chain is Ubiquinone biosynthesis protein coq11, mitochondrial from Schizosaccharomyces pombe (strain 972 / ATCC 24843) (Fission yeast).